The primary structure comprises 85 residues: uncharacterized protein (85 aa).

A coiled-coil region spans residues 17-53; sequence KKRYEMLVQELLKEDDEEREKILAEELELLLDFLKKA.

This is an uncharacterized protein from Archaeoglobus fulgidus (strain ATCC 49558 / DSM 4304 / JCM 9628 / NBRC 100126 / VC-16).